A 426-amino-acid polypeptide reads, in one-letter code: Endoglucanase Z (426 aa).

Positions 1–43 (MPLSYLDKNPVIDSKKHALRKKLFLSCAYFGLSLACLSSNAWA) are cleaved as a signal peptide. A catalytic region spans residues 44–332 (SVEPLSVNGN…VKSIIQSWPY (289 aa)). The Proton donor role is filled by glutamate 176. The Nucleophile role is filled by glutamate 263. The segment at 333–366 (KAGSAASATTDPSTDTTTDTTVDEPTTTDTPATA) is linker. The interval 336-367 (SAASATTDPSTDTTTDTTVDEPTTTDTPATAD) is disordered. The interval 367–426 (DCANANVYPNWVSKDWAGGQPTHNEAGQSIVYKGNLYTANWYTASVPGSDSSWTQVGSCN) is cellulose-binding. An intrachain disulfide couples cysteine 368 to cysteine 425.

The protein belongs to the glycosyl hydrolase 5 (cellulase A) family.

It localises to the secreted. It carries out the reaction Endohydrolysis of (1-&gt;4)-beta-D-glucosidic linkages in cellulose, lichenin and cereal beta-D-glucans.. Functionally, represents 97% of the global cellulase activity. The polypeptide is Endoglucanase Z (celZ) (Dickeya dadantii (strain 3937) (Erwinia chrysanthemi (strain 3937))).